The chain runs to 546 residues: Chaperonin GroEL 2 (546 aa).

ATP is bound by residues 30–33, K51, 87–91, G415, 479–481, and D495; these read TLGP, DGTTT, and NAA. The disordered stretch occupies residues 526 to 546; it reads KEDAPMPGGMPGGMGGMGMDM. Over residues 534–546 the composition is skewed to gly residues; that stretch reads GMPGGMGGMGMDM.

It belongs to the chaperonin (HSP60) family. As to quaternary structure, forms a cylinder of 14 subunits composed of two heptameric rings stacked back-to-back. Interacts with the co-chaperonin GroES.

The protein localises to the cytoplasm. The enzyme catalyses ATP + H2O + a folded polypeptide = ADP + phosphate + an unfolded polypeptide.. Functionally, together with its co-chaperonin GroES, plays an essential role in assisting protein folding. The GroEL-GroES system forms a nano-cage that allows encapsulation of the non-native substrate proteins and provides a physical environment optimized to promote and accelerate protein folding. This Burkholderia lata (strain ATCC 17760 / DSM 23089 / LMG 22485 / NCIMB 9086 / R18194 / 383) protein is Chaperonin GroEL 2.